A 470-amino-acid polypeptide reads, in one-letter code: Negative regulator of sexual conjugation and meiosis (470 aa).

A Protein kinase domain is found at 18-295 (LRFVSIIGAG…ITLPELSTLV (278 aa)). Residues 24 to 32 (IGAGAYGVV) and Lys-47 contribute to the ATP site. Residue Asp-143 is the Proton acceptor of the active site. Ser-469 carries the phosphoserine modification.

The protein belongs to the protein kinase superfamily. Ser/Thr protein kinase family.

It catalyses the reaction L-seryl-[protein] + ATP = O-phospho-L-seryl-[protein] + ADP + H(+). It carries out the reaction L-threonyl-[protein] + ATP = O-phospho-L-threonyl-[protein] + ADP + H(+). Its function is as follows. This protein is a negative regulator of both sexual conjugation and meiosis. It phosphorylates mei2. It blocks the onset of meiosis until conjugation takes place. This Schizosaccharomyces pombe (strain 972 / ATCC 24843) (Fission yeast) protein is Negative regulator of sexual conjugation and meiosis (ran1).